The following is a 212-amino-acid chain: uncharacterized protein (212 aa).

Disordered stretches follow at residues 1-25 and 165-212; these read MARK…GRPN and STSG…HWGG. A compositionally biased stretch (low complexity) spans 202–212; the sequence is RSSSARGHWGG.

This is an uncharacterized protein from Escherichia coli (strain K12).